The sequence spans 182 residues: Lipoprotein signal peptidase (182 aa).

The next 4 membrane-spanning stretches (helical) occupy residues 15–35, 44–64, 65–85, and 97–117; these read IYLGVIFLGIVLDLVTKFLVI, LEVFGSFFRMTLTFNTGFVFG, AFQDNAIPSLIATGVAIVFLI, and PWGWNLVMAGAFGNFLDKFFV. Residues Asp140 and Asp162 contribute to the active site. Residues 155 to 175 traverse the membrane as a helical segment; that stretch reads WPAFNVADSCVTIGLTILIFT.

This sequence belongs to the peptidase A8 family.

It is found in the cell inner membrane. It catalyses the reaction Release of signal peptides from bacterial membrane prolipoproteins. Hydrolyzes -Xaa-Yaa-Zaa-|-(S,diacylglyceryl)Cys-, in which Xaa is hydrophobic (preferably Leu), and Yaa (Ala or Ser) and Zaa (Gly or Ala) have small, neutral side chains.. The protein operates within protein modification; lipoprotein biosynthesis (signal peptide cleavage). Functionally, this protein specifically catalyzes the removal of signal peptides from prolipoproteins. This chain is Lipoprotein signal peptidase, found in Leptospira interrogans serogroup Icterohaemorrhagiae serovar Lai (strain 56601).